We begin with the raw amino-acid sequence, 228 residues long: Prolactin (228 aa).

The signal sequence occupies residues 1-29 (MCPKGSSVKGSLLLLLLMSSRFLFKAVES). An intrachain disulfide couples Cys-33 to Cys-40. Phosphoserine is present on residues Ser-55, Ser-63, and Ser-119. Intrachain disulfides connect Cys-87–Cys-203 and Cys-220–Cys-228.

This sequence belongs to the somatotropin/prolactin family. In terms of assembly, interacts with PRLR.

It localises to the secreted. In terms of biological role, prolactin acts primarily on the mammary gland by promoting lactation. The chain is Prolactin (PRL) from Monodelphis domestica (Gray short-tailed opossum).